A 338-amino-acid polypeptide reads, in one-letter code: Nicotinate-nucleotide--dimethylbenzimidazole phosphoribosyltransferase (338 aa).

The active-site Proton acceptor is the Glu-305.

The protein belongs to the CobT family.

It carries out the reaction 5,6-dimethylbenzimidazole + nicotinate beta-D-ribonucleotide = alpha-ribazole 5'-phosphate + nicotinate + H(+). The protein operates within nucleoside biosynthesis; alpha-ribazole biosynthesis; alpha-ribazole from 5,6-dimethylbenzimidazole: step 1/2. Catalyzes the synthesis of alpha-ribazole-5'-phosphate from nicotinate mononucleotide (NAMN) and 5,6-dimethylbenzimidazole (DMB). The chain is Nicotinate-nucleotide--dimethylbenzimidazole phosphoribosyltransferase from Rhizobium rhizogenes (strain K84 / ATCC BAA-868) (Agrobacterium radiobacter).